Here is a 99-residue protein sequence, read N- to C-terminus: UPF0473 protein SMU_2077c (99 aa).

It belongs to the UPF0473 family.

The polypeptide is UPF0473 protein SMU_2077c (Streptococcus mutans serotype c (strain ATCC 700610 / UA159)).